We begin with the raw amino-acid sequence, 316 residues long: Transaldolase (316 aa).

The active-site Schiff-base intermediate with substrate is Lys-132.

It belongs to the transaldolase family. Type 1 subfamily. Homodimer.

Its subcellular location is the cytoplasm. It carries out the reaction D-sedoheptulose 7-phosphate + D-glyceraldehyde 3-phosphate = D-erythrose 4-phosphate + beta-D-fructose 6-phosphate. It functions in the pathway carbohydrate degradation; pentose phosphate pathway; D-glyceraldehyde 3-phosphate and beta-D-fructose 6-phosphate from D-ribose 5-phosphate and D-xylulose 5-phosphate (non-oxidative stage): step 2/3. Functionally, transaldolase is important for the balance of metabolites in the pentose-phosphate pathway. The sequence is that of Transaldolase from Aliivibrio fischeri (strain MJ11) (Vibrio fischeri).